The chain runs to 593 residues: V-type ATP synthase alpha chain (593 aa).

246 to 253 (GPFGAGKT) lines the ATP pocket.

The protein belongs to the ATPase alpha/beta chains family.

The catalysed reaction is ATP + H2O + 4 H(+)(in) = ADP + phosphate + 5 H(+)(out). Functionally, produces ATP from ADP in the presence of a proton gradient across the membrane. The V-type alpha chain is a catalytic subunit. This Protochlamydia amoebophila (strain UWE25) protein is V-type ATP synthase alpha chain.